The sequence spans 359 residues: CDP-glucose 4,6-dehydratase (359 aa).

Belongs to the NAD(P)-dependent epimerase/dehydratase family. NAD(+) is required as a cofactor.

It carries out the reaction CDP-D-glucose = CDP-4-dehydro-6-deoxy-D-glucose + H2O. The protein operates within nucleotide-sugar biosynthesis; CDP-3,6-dideoxy-D-mannose biosynthesis; CDP-3,6-dideoxy-D-mannose from CTP and alpha-D-glucose 1-phosphate: step 2/5. It functions in the pathway bacterial outer membrane biogenesis; LPS O-antigen biosynthesis. This is CDP-glucose 4,6-dehydratase (rfbG) from Salmonella typhimurium (strain LT2 / SGSC1412 / ATCC 700720).